The chain runs to 353 residues: Protein Wnt-11b-2 (353 aa).

An N-terminal signal peptide occupies residues 1–22 (MALIRHCVTLLLILCCSRLCGA). N-linked (GlcNAc...) asparagine glycans are attached at residues N31, N38, and N88. 5 cysteine pairs are disulfide-bonded: C78–C89, C128–C136, C138–C155, C208–C222, and C210–C217. A lipid anchor (O-palmitoleoyl serine; by PORCN) is attached at S214. Y274 and Y281 each carry sulfotyrosine. 6 disulfides stabilise this stretch: C282-C313, C298-C308, C312-C352, C328-C343, C330-C340, and C335-C336. N-linked (GlcNAc...) asparagine glycosylation is present at N299.

Belongs to the Wnt family. Homodimer. Secreted homodimers form a complex with wnt5a homodimers; tyrosine sulfation of both wnt11 and wnt5a by tpst1 is required for this interaction. Interacts with the transmembrane receptor fzd7/fz7. Interacts with lrp6 and ryk. Interacts with tdgf1/frl1. Interacts weakly with frzb1 and strongly with frzb2/crescent. Interaction with frzb2/crescent antagonizes wnt11 function in the neuroectoderm, but enhances it in mesodermal tissue. Glycosylation is required for protein secretion. Post-translationally, palmitoleoylation is required for efficient binding to frizzled receptors. Depalmitoleoylation leads to Wnt signaling pathway inhibition.

It localises to the secreted. Its subcellular location is the extracellular space. The protein localises to the extracellular matrix. In terms of biological role, ligand for the frizzled7 transmembrane receptor. Primarily acts via non-canonical Wnt pathways mediated by either Ca(2+) and PKC, or by JNK and dvl2/dsh. Depending on the cellular context, can also signal via the canonical Wnt pathway mediated by beta-catenin and dvl2/dsh. May also inhibit canonical Wnt signaling. Maternally initiates dorsal/ventral axis formation by a canonical route, which signals via lrp6. In a complex with wnt5a, activates the canonical and non-canonical processes involved in axis formation. In the non-canonical pathway, acts through fzd7/fz7 to induce phosphorylation of dvl2/dsh. Signals through a non-canonical Wnt pathway to regulate convergent extension movements during gastrulation. Interactions with the secreted Wnt antagonist sfrp5 to coordinate foregut development, acting via a non-canonical wnt pathway whereby sfrp5 restricts wnt11b activity to prevent inappropriate foregut formation. Mediates cardiogenesis via non-canonical Wnt signaling involving JNK-activation and PKC. Acts redundantly with wnt11/wnt11r during pronephros induction. In Xenopus tropicalis (Western clawed frog), this protein is Protein Wnt-11b-2.